The chain runs to 457 residues: Multidrug resistance protein MdtK (457 aa).

The next 12 helical transmembrane spans lie at 11 to 31, 53 to 73, 93 to 113, 127 to 147, 160 to 180, 188 to 208, 243 to 263, 276 to 296, 314 to 334, 350 to 370, 387 to 407, and 418 to 438; these read LLAL…MGFV, IWLP…PVIA, WLAG…GYII, AVGY…FQVA, GMVM…IFIY, LGGI…FIAM, LPIA…ALLV, IALN…AAVT, AART…IFTV, VVAL…SDSI, IFFI…YILA, and PAGF…LMML.

The protein belongs to the multi antimicrobial extrusion (MATE) (TC 2.A.66.1) family. MdtK subfamily.

The protein localises to the cell inner membrane. Functionally, multidrug efflux pump that functions probably as a Na(+)/drug antiporter. The protein is Multidrug resistance protein MdtK of Salmonella newport (strain SL254).